We begin with the raw amino-acid sequence, 98 residues long: Aspartyl/glutamyl-tRNA(Asn/Gln) amidotransferase subunit C (98 aa).

The disordered stretch occupies residues 70 to 98 (PSLTPEQALSGAPAQEQQRFKVPQILGED).

Belongs to the GatC family. As to quaternary structure, heterotrimer of A, B and C subunits.

It carries out the reaction L-glutamyl-tRNA(Gln) + L-glutamine + ATP + H2O = L-glutaminyl-tRNA(Gln) + L-glutamate + ADP + phosphate + H(+). The enzyme catalyses L-aspartyl-tRNA(Asn) + L-glutamine + ATP + H2O = L-asparaginyl-tRNA(Asn) + L-glutamate + ADP + phosphate + 2 H(+). In terms of biological role, allows the formation of correctly charged Asn-tRNA(Asn) or Gln-tRNA(Gln) through the transamidation of misacylated Asp-tRNA(Asn) or Glu-tRNA(Gln) in organisms which lack either or both of asparaginyl-tRNA or glutaminyl-tRNA synthetases. The reaction takes place in the presence of glutamine and ATP through an activated phospho-Asp-tRNA(Asn) or phospho-Glu-tRNA(Gln). The sequence is that of Aspartyl/glutamyl-tRNA(Asn/Gln) amidotransferase subunit C from Streptomyces avermitilis (strain ATCC 31267 / DSM 46492 / JCM 5070 / NBRC 14893 / NCIMB 12804 / NRRL 8165 / MA-4680).